The sequence spans 369 residues: Protein RecA (369 aa).

Over residues Met-1 to Lys-10 the composition is skewed to basic and acidic residues. The disordered stretch occupies residues Met-1–Glu-20. Gly-82–Thr-89 contributes to the ATP binding site. The interval Pro-350–Val-369 is disordered. The span at Asp-358 to Val-369 shows a compositional bias: acidic residues.

The protein belongs to the RecA family.

It is found in the cytoplasm. Functionally, can catalyze the hydrolysis of ATP in the presence of single-stranded DNA, the ATP-dependent uptake of single-stranded DNA by duplex DNA, and the ATP-dependent hybridization of homologous single-stranded DNAs. It interacts with LexA causing its activation and leading to its autocatalytic cleavage. The chain is Protein RecA from Gloeobacter violaceus (strain ATCC 29082 / PCC 7421).